A 557-amino-acid polypeptide reads, in one-letter code: Carboxypeptidase Y homolog A (557 aa).

A signal peptide spans M1–V17. The propeptide occupies P18 to K138. 5 disulfide bridges follow: C193-C433, C327-C341, C351-C374, C358-C367, and C396-C403. An N-linked (GlcNAc...) asparagine glycan is attached at N224. S280 is an active-site residue. The active site involves D472. N523 carries N-linked (GlcNAc...) asparagine glycosylation. H534 is a catalytic residue.

This sequence belongs to the peptidase S10 family.

It localises to the vacuole. It carries out the reaction Release of a C-terminal amino acid with broad specificity.. Vacuolar carboxypeptidase involved in degradation of small peptides. Digests preferentially peptides containing an aliphatic or hydrophobic residue in P1' position, as well as methionine, leucine or phenylalanine in P1 position of ester substrate. In Aspergillus niger (strain ATCC MYA-4892 / CBS 513.88 / FGSC A1513), this protein is Carboxypeptidase Y homolog A (cpyA).